A 304-amino-acid chain; its full sequence is Hairy/enhancer-of-split related with YRPW motif protein 1 (304 aa).

Positions 1-52 (MKRAHPDYSSSDSELDETVEVEKESADENGNLSSALGSMSPTTSSQILARKR) are disordered. Polar residues predominate over residues 28–47 (ENGNLSSALGSMSPTTSSQI). Positions 48 to 117 (LARKRRRGII…GGKGYFDAHA (70 aa)) are transcriptional repression and interaction with NCOR1 and SIN3A. In terms of domain architecture, bHLH spans 49-104 (ARKRRRGIIEKRRRDRINNSLSELRRLVPSAFEKQGSAKLEKAEILQMTVDHLKML). An Orange domain is found at 122-158 (YRSLGFRECLAEVARYLSIIEGLDASDPLRVRLVSHL). The disordered stretch occupies residues 191–234 (AHPLLLPQSGHGNTGTSASPTDPHHQGRLAAAHPEAPALRAPPS). The segment covering 200–210 (GHGNTGTSASP) has biased composition (polar residues). The span at 218–234 (RLAAAHPEAPALRAPPS) shows a compositional bias: low complexity.

Belongs to the HEY family. Self-associates. Interacts with HES1 and HEYL. Interacts with HDAC1, NCOR1 and SIN3A. Interacts with GATA4 and GATA6. Interacts with CCDC89/BOIP.

The protein localises to the nucleus. Functionally, transcriptional repressor which binds preferentially to the canonical E box sequence 5'-CACGTG-3'. Downstream effector of Notch signaling required for cardiovascular development. Specifically required for the Notch-induced endocardial epithelial to mesenchymal transition, which is itself criticial for cardiac valve and septum development. May be required in conjunction with HEY2 to specify arterial cell fate or identity. Promotes maintenance of neuronal precursor cells and glial versus neuronal fate specification. Represses transcription by the cardiac transcriptional activators GATA4 and GATA6 and by the neuronal bHLH factors ASCL1/MASH1 and NEUROD4/MATH3. This chain is Hairy/enhancer-of-split related with YRPW motif protein 1 (HEY1), found in Canis lupus familiaris (Dog).